The chain runs to 381 residues: Succinyl-diaminopimelate desuccinylase (381 aa).

His-69 provides a ligand contact to Zn(2+). Residue Asp-71 is part of the active site. Asp-103 lines the Zn(2+) pocket. The active-site Proton acceptor is the Glu-137. 3 residues coordinate Zn(2+): Glu-138, Glu-166, and His-355.

The protein belongs to the peptidase M20A family. DapE subfamily. In terms of assembly, homodimer. The cofactor is Zn(2+). Co(2+) serves as cofactor.

It catalyses the reaction N-succinyl-(2S,6S)-2,6-diaminopimelate + H2O = (2S,6S)-2,6-diaminopimelate + succinate. It functions in the pathway amino-acid biosynthesis; L-lysine biosynthesis via DAP pathway; LL-2,6-diaminopimelate from (S)-tetrahydrodipicolinate (succinylase route): step 3/3. Functionally, catalyzes the hydrolysis of N-succinyl-L,L-diaminopimelic acid (SDAP), forming succinate and LL-2,6-diaminopimelate (DAP), an intermediate involved in the bacterial biosynthesis of lysine and meso-diaminopimelic acid, an essential component of bacterial cell walls. In Rickettsia rickettsii (strain Iowa), this protein is Succinyl-diaminopimelate desuccinylase.